The chain runs to 390 residues: Chorismate synthase 1 (390 aa).

NADP(+) contacts are provided by Arg-39 and Arg-45. Residues 132-134 (RSS), 253-254 (NA), Gly-298, 313-317 (KPIPT), and Arg-339 contribute to the FMN site.

Belongs to the chorismate synthase family. Homotetramer. It depends on FMNH2 as a cofactor.

The catalysed reaction is 5-O-(1-carboxyvinyl)-3-phosphoshikimate = chorismate + phosphate. It functions in the pathway metabolic intermediate biosynthesis; chorismate biosynthesis; chorismate from D-erythrose 4-phosphate and phosphoenolpyruvate: step 7/7. In terms of biological role, catalyzes the anti-1,4-elimination of the C-3 phosphate and the C-6 proR hydrogen from 5-enolpyruvylshikimate-3-phosphate (EPSP) to yield chorismate, which is the branch point compound that serves as the starting substrate for the three terminal pathways of aromatic amino acid biosynthesis. This reaction introduces a second double bond into the aromatic ring system. This Bacillus anthracis protein is Chorismate synthase 1.